We begin with the raw amino-acid sequence, 157 residues long: NADPH-dependent 7-cyano-7-deazaguanine reductase (157 aa).

The active-site Thioimide intermediate is the C55. D62 serves as the catalytic Proton donor. Residues 77-79 (VES) and 96-97 (HE) contribute to the substrate site.

The protein belongs to the GTP cyclohydrolase I family. QueF type 1 subfamily.

The protein resides in the cytoplasm. The enzyme catalyses 7-aminomethyl-7-carbaguanine + 2 NADP(+) = 7-cyano-7-deazaguanine + 2 NADPH + 3 H(+). The protein operates within tRNA modification; tRNA-queuosine biosynthesis. Its function is as follows. Catalyzes the NADPH-dependent reduction of 7-cyano-7-deazaguanine (preQ0) to 7-aminomethyl-7-deazaguanine (preQ1). The protein is NADPH-dependent 7-cyano-7-deazaguanine reductase of Neisseria meningitidis serogroup A / serotype 4A (strain DSM 15465 / Z2491).